The primary structure comprises 259 residues: tRNA pseudouridine synthase A (259 aa).

Asp-50 (nucleophile) is an active-site residue. Tyr-101 provides a ligand contact to substrate.

This sequence belongs to the tRNA pseudouridine synthase TruA family.

It carries out the reaction uridine(38/39/40) in tRNA = pseudouridine(38/39/40) in tRNA. Its function is as follows. Formation of pseudouridine at positions 38, 39 and 40 in the anticodon stem and loop of transfer RNAs. This chain is tRNA pseudouridine synthase A, found in Methanocaldococcus jannaschii (strain ATCC 43067 / DSM 2661 / JAL-1 / JCM 10045 / NBRC 100440) (Methanococcus jannaschii).